A 184-amino-acid polypeptide reads, in one-letter code: ATP synthase subunit b, chloroplastic (184 aa).

A helical membrane pass occupies residues 31 to 53 (LINLGIVISLLIYFGKGVLSNLL).

This sequence belongs to the ATPase B chain family. F-type ATPases have 2 components, F(1) - the catalytic core - and F(0) - the membrane proton channel. F(1) has five subunits: alpha(3), beta(3), gamma(1), delta(1), epsilon(1). F(0) has four main subunits: a(1), b(1), b'(1) and c(10-14). The alpha and beta chains form an alternating ring which encloses part of the gamma chain. F(1) is attached to F(0) by a central stalk formed by the gamma and epsilon chains, while a peripheral stalk is formed by the delta, b and b' chains.

Its subcellular location is the plastid. It localises to the chloroplast thylakoid membrane. In terms of biological role, f(1)F(0) ATP synthase produces ATP from ADP in the presence of a proton or sodium gradient. F-type ATPases consist of two structural domains, F(1) containing the extramembraneous catalytic core and F(0) containing the membrane proton channel, linked together by a central stalk and a peripheral stalk. During catalysis, ATP synthesis in the catalytic domain of F(1) is coupled via a rotary mechanism of the central stalk subunits to proton translocation. Component of the F(0) channel, it forms part of the peripheral stalk, linking F(1) to F(0). The polypeptide is ATP synthase subunit b, chloroplastic (Aneura mirabilis (Parasitic liverwort)).